We begin with the raw amino-acid sequence, 430 residues long: GTPase Obg (430 aa).

The region spanning 1–158 is the Obg domain; it reads MFVDQVKISL…LDVSLELKLL (158 aa). The interval 118-145 is disordered; that stretch reads KGGRGGRGNSRFATPRNPAPDFSEKGEP. Residues 159 to 329 enclose the OBG-type G domain; that stretch reads ADVGLVGFPS…LLYAIADKLE (171 aa). Residues 165–172, 190–194, 212–215, 282–285, and 310–312 each bind GTP; these read GFPSVGKS, FTTIK, DLPG, NKMD, and STI. 2 residues coordinate Mg(2+): Ser172 and Thr192. Residues 352-430 form the OCT domain; sequence KHTPSQDKFT…ILGGEFEFVE (79 aa).

It belongs to the TRAFAC class OBG-HflX-like GTPase superfamily. OBG GTPase family. As to quaternary structure, monomer. Mg(2+) serves as cofactor.

Its subcellular location is the cytoplasm. Functionally, an essential GTPase which binds GTP, GDP and possibly (p)ppGpp with moderate affinity, with high nucleotide exchange rates and a fairly low GTP hydrolysis rate. Plays a role in control of the cell cycle, stress response, ribosome biogenesis and in those bacteria that undergo differentiation, in morphogenesis control. The chain is GTPase Obg from Staphylococcus aureus (strain Mu3 / ATCC 700698).